The primary structure comprises 59 residues: U-actitoxin-Aer2a (59 aa).

Post-translationally, contains 5 disulfide bonds.

It is found in the secreted. It localises to the nematocyst. In Anemonia erythraea (Sea anemone), this protein is U-actitoxin-Aer2a.